A 473-amino-acid polypeptide reads, in one-letter code: Cell division protein FtsP (473 aa).

A signal peptide (tat-type signal) is located at residues 1–27 (MSLSRRQFIQASGLAMCLGALPFAVQA).

The protein belongs to the FtsP family. In terms of processing, predicted to be exported by the Tat system. The position of the signal peptide cleavage has not been experimentally proven.

The protein localises to the periplasm. Cell division protein that is required for growth during stress conditions. May be involved in protecting or stabilizing the divisomal assembly under conditions of stress. In Xenorhabdus nematophila (strain ATCC 19061 / DSM 3370 / CCUG 14189 / LMG 1036 / NCIMB 9965 / AN6), this protein is Cell division protein FtsP.